Reading from the N-terminus, the 180-residue chain is Acireductone dioxygenase (180 aa).

Positions 97, 99, 103, and 141 each coordinate Fe(2+). Histidine 97, histidine 99, glutamate 103, and histidine 141 together coordinate Ni(2+).

It belongs to the acireductone dioxygenase (ARD) family. As to quaternary structure, monomer. Fe(2+) is required as a cofactor. Requires Ni(2+) as cofactor.

It catalyses the reaction 1,2-dihydroxy-5-(methylsulfanyl)pent-1-en-3-one + O2 = 3-(methylsulfanyl)propanoate + CO + formate + 2 H(+). It carries out the reaction 1,2-dihydroxy-5-(methylsulfanyl)pent-1-en-3-one + O2 = 4-methylsulfanyl-2-oxobutanoate + formate + 2 H(+). Its pathway is amino-acid biosynthesis; L-methionine biosynthesis via salvage pathway; L-methionine from S-methyl-5-thio-alpha-D-ribose 1-phosphate: step 5/6. In terms of biological role, catalyzes 2 different reactions between oxygen and the acireductone 1,2-dihydroxy-3-keto-5-methylthiopentene (DHK-MTPene) depending upon the metal bound in the active site. Fe-containing acireductone dioxygenase (Fe-ARD) produces formate and 2-keto-4-methylthiobutyrate (KMTB), the alpha-ketoacid precursor of methionine in the methionine recycle pathway. Ni-containing acireductone dioxygenase (Ni-ARD) produces methylthiopropionate, carbon monoxide and formate, and does not lie on the methionine recycle pathway. The polypeptide is Acireductone dioxygenase (Citrobacter koseri (strain ATCC BAA-895 / CDC 4225-83 / SGSC4696)).